We begin with the raw amino-acid sequence, 150 residues long: Protein SLM6 (150 aa).

Topologically, residues 1 to 76 (MCSRFSSTSL…SLLRSGVFPS (76 aa)) are extracellular. Residues 77-97 (WLFCMFSSILALAISNSFFFF) traverse the membrane as a helical segment. At 98–104 (SSNACFS) the chain is on the cytoplasmic side. The chain crosses the membrane as a helical span at residues 105-125 (LLFNSFLVTGFSFSADLLVLA). Residues 126–150 (AAADTLESNVSNDIGGNCATRLFKL) lie on the Extracellular side of the membrane.

It is found in the membrane. This chain is Protein SLM6, found in Saccharomyces cerevisiae (strain ATCC 204508 / S288c) (Baker's yeast).